The chain runs to 379 residues: Pectin lyase A (379 aa).

Residues 1–20 form the signal peptide; it reads MKYSTIFSAAAAVFAGSAAA. Cystine bridges form between cysteine 83/cysteine 102 and cysteine 92/cysteine 226. Threonine 88 carries an O-linked (Man) threonine glycan. An N-linked (GlcNAc...) asparagine glycan is attached at asparagine 129. Arginine 256 is an active-site residue. An intrachain disulfide couples cysteine 322 to cysteine 330. Residue serine 368 is glycosylated (O-linked (Man) serine; in strain 4M-147).

The protein belongs to the polysaccharide lyase 1 family. N-glycosylated at Asn-129 and O-glycosylated at Thr-88 when expressed in Aspergillus nidulans. The protein from strain 4M-147 is O-glycosylated at Thr-88 and Ser-368. PubMed:9195887 modeled GalNAc at the O-glycosylation site, a glycosylation not observed in fungi. The O-linked saccharide is probably mannose.

It localises to the secreted. It catalyses the reaction Eliminative cleavage of (1-&gt;4)-alpha-D-galacturonan methyl ester to give oligosaccharides with 4-deoxy-6-O-methyl-alpha-D-galact-4-enuronosyl groups at their non-reducing ends.. In terms of biological role, pectinolytic enzymes consist of four classes of enzymes: pectin lyase, polygalacturonase, pectin methylesterase and rhamnogalacturonase. Among pectinolytic enzymes, pectin lyase is the most important in depolymerization of pectin, since it cleaves internal glycosidic bonds of highly methylated pectins. The chain is Pectin lyase A (pelA) from Aspergillus niger.